Here is a 528-residue protein sequence, read N- to C-terminus: Sphingosine-1-phosphate lyase (528 aa).

A helical membrane pass occupies residues 13–35 (PAKLVLATAGITAASILAYQAIT). Lys-324 bears the N6-(pyridoxal phosphate)lysine mark.

Belongs to the group II decarboxylase family. Sphingosine-1-phosphate lyase subfamily. It depends on pyridoxal 5'-phosphate as a cofactor.

The protein localises to the endoplasmic reticulum membrane. It carries out the reaction sphinganine 1-phosphate = hexadecanal + phosphoethanolamine. The protein operates within lipid metabolism; sphingolipid metabolism. Cleaves phosphorylated sphingoid bases (PSBs), such as sphingosine-1-phosphate, into fatty aldehydes and phosphoethanolamine. Sphingosine-1-phosphate (S1P) probably acts intracellularly as a second messenger perhaps by promoting cell proliferation; the absence of S1P lyase increases its concentration. This leads to increased lateral pseudopod formation as well as defects in the efficiency of chemotaxis. Overexpression of S1P lyase causes decreased growth rates, entry into stationary phase at lower cell density and increased sensitivity to the antitumor agents cisplatin and carboplatin; these effects are more pronounced in cells that express more enzyme. This chain is Sphingosine-1-phosphate lyase (sglA), found in Dictyostelium discoideum (Social amoeba).